The primary structure comprises 216 residues: ATP synthase subunit C lysine N-methyltransferase (216 aa).

M1 is modified (N-acetylmethionine). The segment covering 1-12 (MERGETPEEERQ) has biased composition (basic and acidic residues). The disordered stretch occupies residues 1-25 (MERGETPEEERQSGCVLPTSPESDS). A helical transmembrane segment spans residues 31–50 (WGFLITGVIGGALVTVYAVT). Positions 51 to 85 (TPFIAPALRKVCLPFVPATSRQVENVVKMLQHRRG) are required for mitochondrial location.

The protein belongs to the ANT/ATPSC lysine N-methyltransferase family.

Its subcellular location is the mitochondrion membrane. It catalyses the reaction L-lysyl-[protein] + 3 S-adenosyl-L-methionine = N(6),N(6),N(6)-trimethyl-L-lysyl-[protein] + 3 S-adenosyl-L-homocysteine + 3 H(+). Mitochondrial protein-lysine N-methyltransferase that trimethylates ATP synthase subunit C, ATP5MC1 and ATP5MC2. Trimethylation is required for proper incorporation of the C subunit into the ATP synthase complex and mitochondrial respiration. Promotes chronic pain. Involved in persistent inflammatory and neuropathic pain: methyltransferase activity in the mitochondria of sensory neurons promotes chronic pain via a pathway that depends on the production of reactive oxygen species (ROS) and on the engagement of spinal cord microglia. This is ATP synthase subunit C lysine N-methyltransferase (Atpsckmt) from Rattus norvegicus (Rat).